A 547-amino-acid chain; its full sequence is Chaperonin GroEL 3 (547 aa).

ATP is bound by residues 30–33, K51, 87–91, G415, and D496; these read TLGP and DGTTT.

This sequence belongs to the chaperonin (HSP60) family. Forms a cylinder of 14 subunits composed of two heptameric rings stacked back-to-back. Interacts with the co-chaperonin GroES.

Its subcellular location is the cytoplasm. It catalyses the reaction ATP + H2O + a folded polypeptide = ADP + phosphate + an unfolded polypeptide.. Functionally, together with its co-chaperonin GroES, plays an essential role in assisting protein folding. The GroEL-GroES system forms a nano-cage that allows encapsulation of the non-native substrate proteins and provides a physical environment optimized to promote and accelerate protein folding. The polypeptide is Chaperonin GroEL 3 (Bradyrhizobium sp. (strain ORS 278)).